The sequence spans 224 residues: 4'-phosphopantetheinyl transferase ffp (224 aa).

The Mg(2+) site is built by aspartate 107, glutamate 109, and glutamate 151. The segment at 158–189 (GKGLSLPLDSFSVRLHEDGRVSVELPEHHTPC) is peptidyl carrier protein binding.

Belongs to the P-Pant transferase superfamily. Gsp/Sfp/HetI/AcpT family. Mg(2+) serves as cofactor.

The enzyme catalyses apo-[peptidyl-carrier protein] + CoA = holo-[peptidyl-carrier protein] + adenosine 3',5'-bisphosphate + H(+). In terms of biological role, may activate the peptidyl carrier protein (PCP) domains of fengycin synthase by transferring the 4'-phosphopantetheinyl moiety of coenzyme A (CoA) to a serine residue. This is 4'-phosphopantetheinyl transferase ffp (ffp) from Bacillus subtilis.